The chain runs to 209 residues: Large ribosomal subunit protein uL3 (209 aa).

N5-methylglutamine is present on glutamine 150.

This sequence belongs to the universal ribosomal protein uL3 family. As to quaternary structure, part of the 50S ribosomal subunit. Forms a cluster with proteins L14 and L19. Post-translationally, methylated by PrmB.

In terms of biological role, one of the primary rRNA binding proteins, it binds directly near the 3'-end of the 23S rRNA, where it nucleates assembly of the 50S subunit. This is Large ribosomal subunit protein uL3 from Buchnera aphidicola subsp. Schizaphis graminum (strain Sg).